The chain runs to 593 residues: Copine-5 (593 aa).

One can recognise a C2 1 domain in the interval 2–134 (EQPEDMASLS…SSGSRLEKPL (133 aa)). Residue S19 is modified to Phosphoserine. Ca(2+) contacts are provided by D38, D44, D98, D100, S103, K108, and D110. S103 is subject to Phosphoserine. At S140 the chain carries Phosphoserine. Positions 161–284 (KCGTIILSAE…ARGQSQFNIY (124 aa)) constitute a C2 2 domain. 5 residues coordinate Ca(2+): D192, D198, D254, D256, and D262. The VWFA domain occupies 328 to 554 (NFTVAIDFTA…DVLAEIPDQL (227 aa)). Residues 562 to 593 (GIRPRPPPAAPAQSPPQSPAHSPPGSPVHTHI) are disordered. Over residues 565 to 587 (PRPPPAAPAQSPPQSPAHSPPGS) the composition is skewed to pro residues.

The protein belongs to the copine family. Ca(2+) is required as a cofactor. Expressed in the cerebra and cerebellum of newborn brain. Expressed in the eye, lung and muscles but weakly expressed in the adult brain (at protein level).

It is found in the perikaryon. The protein localises to the cell projection. In terms of biological role, probable calcium-dependent phospholipid-binding protein that may play a role in calcium-mediated intracellular processes. Plays a role in dendrite formation by melanocytes. The chain is Copine-5 from Mus musculus (Mouse).